The primary structure comprises 66 residues: Large ribosomal subunit protein bL33c (66 aa).

This sequence belongs to the bacterial ribosomal protein bL33 family.

Its subcellular location is the plastid. It localises to the chloroplast. This Phalaenopsis aphrodite subsp. formosana (Moth orchid) protein is Large ribosomal subunit protein bL33c.